We begin with the raw amino-acid sequence, 372 residues long: MENTVQNKPIIELRSITKSYGSNTIIKDFNLTINNGEFLTILGPSGCGKTTVLRLLAGLEELDSGNIILDGEDITNVPAEKRHVNTVFQSYALFPHMTIFENVAFGLRMQKVPEAEIKPRVLEALRMVQLEEMADRKPTQLSGGQQQRIAIARAVVNKPKVLLLDESLSALDYKLRKQMQYELKVLQRQLGITFIFVTHDQEEAITMSDRIVLLRKGKIAQDGSPREIYEEPANLFVARFIGEINVFDATVIERKSENVVLANVEGRVCDIYTDIPVKKDQQLQVLLRPEDIVIKELDEHEHSKAIIGHIIDRTYKGMTLESTVEFEQNGKRGLVSEFFNEDDPHMDHSIGQRVGITWHEGWEVVLNDEDNQ.

One can recognise an ABC transporter domain in the interval 11–241 (IELRSITKSY…PANLFVARFI (231 aa)). 43-50 (GPSGCGKT) lines the ATP pocket.

It belongs to the ABC transporter superfamily. Spermidine/putrescine importer (TC 3.A.1.11.1) family. The complex is composed of two ATP-binding proteins (PotA), two transmembrane proteins (PotB and PotC) and a solute-binding protein (PotD).

It localises to the cell inner membrane. It catalyses the reaction ATP + H2O + polyamine-[polyamine-binding protein]Side 1 = ADP + phosphate + polyamineSide 2 + [polyamine-binding protein]Side 1.. In terms of biological role, part of the ABC transporter complex PotABCD involved in spermidine/putrescine import. Responsible for energy coupling to the transport system. The chain is Spermidine/putrescine import ATP-binding protein PotA from Aggregatibacter actinomycetemcomitans (Actinobacillus actinomycetemcomitans).